We begin with the raw amino-acid sequence, 314 residues long: Vacuolar membrane protein FOSTERSB_4073 (314 aa).

The segment at Lys32–Ala60 is disordered. The helical transmembrane segment at Val93 to Leu113 threads the bilayer. Ser148, Ser254, and Ser274 each carry phosphoserine. The tract at residues Glu240–Asn309 is disordered. Residues Ser254–His269 show a composition bias toward basic and acidic residues.

This sequence belongs to the PRM5 family.

Its subcellular location is the vacuole membrane. This chain is Vacuolar membrane protein FOSTERSB_4073, found in Saccharomyces cerevisiae (strain FostersB) (Baker's yeast).